Here is a 110-residue protein sequence, read N- to C-terminus: uncharacterized protein (110 aa).

3 consecutive transmembrane segments (helical) span residues 32 to 52, 57 to 77, and 90 to 110; these read VLNVVSIAILFETPHRLALVP, YTHMAIPLSTCLFCLCLCICI, and FLASFFVLILTINDLDVTFVI.

It is found in the membrane. Functionally, may play a role in proper chromosome segregation. Suppresses the high-frequency loss of mini-chromosomes when overexpressed, and this suppression is completely dependent on silencing protein SIR4. This is an uncharacterized protein from Saccharomyces cerevisiae (strain ATCC 204508 / S288c) (Baker's yeast).